Consider the following 737-residue polypeptide: Transcriptional repressor CTCF (737 aa).

The residue at position 1 (methionine 1) is an N-acetylmethionine. Lysine 18 participates in a covalent cross-link: Glycyl lysine isopeptide (Lys-Gly) (interchain with G-Cter in SUMO2). A Glycyl lysine isopeptide (Lys-Gly) (interchain with G-Cter in SUMO) cross-link involves residue lysine 74. The disordered stretch occupies residues 180–211 (QGELPPQEDPSWQKDPDYQPPAKKTKKTKKSK). Over residues 202–211 (KKTKKTKKSK) the composition is skewed to basic residues. Lysine 219 is covalently cross-linked (Glycyl lysine isopeptide (Lys-Gly) (interchain with G-Cter in SUMO2)). Residues 266 to 288 (FQCELCSYTCPRRSNLDRHMKSH) form a C2H2-type 1 zinc finger. At threonine 289 the chain carries Phosphothreonine. The C2H2-type 2 zinc finger occupies 294 to 316 (HKCHLCGRAFRTVTLLRNHLNTH). Residue threonine 317 is modified to Phosphothreonine. 2 consecutive C2H2-type zinc fingers follow at residues 322–345 (HKCPDCDMAFVTSGELVRHRRYKH) and 351–373 (FKCSMCDYASVEVSKLKRHIRSH). Residue threonine 374 is modified to Phosphothreonine. The segment at 379 to 401 (FQCSLCSYASRDTYKLKRHMRTH) adopts a C2H2-type 5 zinc-finger fold. Position 402 is a phosphoserine (serine 402). C2H2-type zinc fingers lie at residues 407 to 430 (YECYICHARFTQSGTMKMHILQKH), 437 to 460 (FHCPHCDTVIARKSDLGVHLRKQH), 467 to 489 (KKCRYCDAVFHERYALIQHQKSH), 495 to 517 (FKCDQCDYACRQERHMIMHKRTH), and 523 to 546 (YACSHCDKTFRQKQLLDMHFKRYH). Residues 555 to 577 (FVCSKCGKTFTRRNTMARHADNC) form a C2H2-type 11; atypical zinc finger. Disordered stretches follow at residues 573–687 (HADN…EDQN) and 699–727 (KKEPDAEPAEGEEEEAQAAPADAPNGDLT). Residues 593 to 604 (KSKRGRKRKMRS) are compositionally biased toward basic residues. A phosphoserine mark is found at serine 609, serine 610, and serine 612. Residues 610-636 (SDSENAEPDLDDNEEEEEPAVEIEPEP) are compositionally biased toward acidic residues. Over residues 637 to 657 (EPQPQPQPQPQPQPVAPAPPP) the composition is skewed to pro residues. Positions 668-687 (RTNQPKQNQPTAIIQVEDQN) are enriched in polar residues. Residue lysine 699 forms a Glycyl lysine isopeptide (Lys-Gly) (interchain with G-Cter in SUMO); alternate linkage. Lysine 699 participates in a covalent cross-link: Glycyl lysine isopeptide (Lys-Gly) (interchain with G-Cter in SUMO2); alternate. The span at 704 to 714 (AEPAEGEEEEA) shows a compositional bias: acidic residues.

Belongs to the CTCF zinc-finger protein family. As to quaternary structure, interacts with CHD8. Interacts with LLPH. Interacts with CENPE. Interacts with BRD2; promoting BRD2 recruitment to chromatin. Post-translationally, sumoylated on Lys-74 and Lys-699; sumoylation of CTCF contributes to the repressive function of CTCF on the MYC P2 promoter.

The protein resides in the nucleus. It is found in the nucleoplasm. The protein localises to the chromosome. Its subcellular location is the centromere. Chromatin binding factor that binds to DNA sequence specific sites and regulates the 3D structure of chromatin. Binds together strands of DNA, thus forming chromatin loops, and anchors DNA to cellular structures, such as the nuclear lamina. Defines the boundaries between active and heterochromatic DNA via binding to chromatin insulators, thereby preventing interaction between promoter and nearby enhancers and silencers. Plays a critical role in the epigenetic regulation. Participates in the allele-specific gene expression at the imprinted IGF2/H19 gene locus. On the maternal allele, binding within the H19 imprinting control region (ICR) mediates maternally inherited higher-order chromatin conformation to restrict enhancer access to IGF2. Mediates interchromosomal association between IGF2/H19 and WSB1/NF1 and may direct distant DNA segments to a common transcription factory. Regulates asynchronous replication of IGF2/H19. Plays a critical role in gene silencing over considerable distances in the genome. Preferentially interacts with unmethylated DNA, preventing spreading of CpG methylation and maintaining methylation-free zones. Inversely, binding to target sites is prevented by CpG methylation. Plays an important role in chromatin remodeling. Can dimerize when it is bound to different DNA sequences, mediating long-range chromatin looping. Causes local loss of histone acetylation and gain of histone methylation in the beta-globin locus, without affecting transcription. When bound to chromatin, it provides an anchor point for nucleosomes positioning. Seems to be essential for homologous X-chromosome pairing. May participate with Tsix in establishing a regulatable epigenetic switch for X chromosome inactivation. May play a role in preventing the propagation of stable methylation at the escape genes from X-inactivation. Involved in sister chromatid cohesion. Associates with both centromeres and chromosomal arms during metaphase and required for cohesin localization to CTCF sites. Plays a role in the recruitment of CENPE to the pericentromeric/centromeric regions of the chromosome during mitosis. Acts as a transcriptional repressor binding to promoters of vertebrate MYC gene and BAG1 gene. Also binds to the PLK and PIM1 promoters. Acts as a transcriptional activator of APP. Regulates APOA1/C3/A4/A5 gene cluster and controls MHC class II gene expression. Plays an essential role in oocyte and preimplantation embryo development by activating or repressing transcription. Seems to act as tumor suppressor. This chain is Transcriptional repressor CTCF (Ctcf), found in Rattus norvegicus (Rat).